Here is a 235-residue protein sequence, read N- to C-terminus: MKLIVGLGNPGAKYAANRHNVGFMAVERIAGDHGFSPWRARFQGEIAEGRLGETRVTLLKPATFMNLSGQSVGEAMRYLKLAPQDVIVLHDELDLAPGKVRLKTGGGHAGHNGLRSLHQHIGEGYRRLRIGIGHPGDKDRVAGYVLSDFAKAEQAGLDDLLRGISDGAAALAAGDDARFMNAVAARVAPARNSGTRPDNPGKGSPEKPAAKPANDPIAEPPSLSDRLRALTERFR.

Position 14 (Tyr14) interacts with tRNA. His19 functions as the Proton acceptor in the catalytic mechanism. Residues Phe64, Asn66, and Asn112 each contribute to the tRNA site. A disordered region spans residues 188 to 235; that stretch reads APARNSGTRPDNPGKGSPEKPAAKPANDPIAEPPSLSDRLRALTERFR. Residues 225 to 235 show a composition bias toward basic and acidic residues; that stretch reads DRLRALTERFR.

The protein belongs to the PTH family. In terms of assembly, monomer.

The protein resides in the cytoplasm. It carries out the reaction an N-acyl-L-alpha-aminoacyl-tRNA + H2O = an N-acyl-L-amino acid + a tRNA + H(+). Its function is as follows. Hydrolyzes ribosome-free peptidyl-tRNAs (with 1 or more amino acids incorporated), which drop off the ribosome during protein synthesis, or as a result of ribosome stalling. In terms of biological role, catalyzes the release of premature peptidyl moieties from peptidyl-tRNA molecules trapped in stalled 50S ribosomal subunits, and thus maintains levels of free tRNAs and 50S ribosomes. The polypeptide is Peptidyl-tRNA hydrolase (Paracoccus denitrificans (strain Pd 1222)).